We begin with the raw amino-acid sequence, 209 residues long: Ribosomal RNA large subunit methyltransferase E (209 aa).

Residues glycine 63, tryptophan 65, aspartate 83, aspartate 99, and aspartate 124 each coordinate S-adenosyl-L-methionine. Lysine 164 functions as the Proton acceptor in the catalytic mechanism.

Belongs to the class I-like SAM-binding methyltransferase superfamily. RNA methyltransferase RlmE family.

It is found in the cytoplasm. The catalysed reaction is uridine(2552) in 23S rRNA + S-adenosyl-L-methionine = 2'-O-methyluridine(2552) in 23S rRNA + S-adenosyl-L-homocysteine + H(+). Specifically methylates the uridine in position 2552 of 23S rRNA at the 2'-O position of the ribose in the fully assembled 50S ribosomal subunit. This is Ribosomal RNA large subunit methyltransferase E from Aliivibrio fischeri (strain MJ11) (Vibrio fischeri).